Reading from the N-terminus, the 180-residue chain is Dual-action ribosomal maturation protein DarP (180 aa).

Positions 1 to 13 (MKPDKTENTEHGI) are enriched in basic and acidic residues. The segment at 1 to 21 (MKPDKTENTEHGIEPVSKTKR) is disordered.

Belongs to the DarP family.

Its subcellular location is the cytoplasm. In terms of biological role, member of a network of 50S ribosomal subunit biogenesis factors which assembles along the 30S-50S interface, preventing incorrect 23S rRNA structures from forming. Promotes peptidyl transferase center (PTC) maturation. This is Dual-action ribosomal maturation protein DarP from Methylobacillus flagellatus (strain ATCC 51484 / DSM 6875 / VKM B-1610 / KT).